The sequence spans 212 residues: MSGMFITVEGPDGSGKSTQLQLLVENLKQKGYDIVVTREPGGTTVGNQIREVLLSPDHHEMTPRVEMMLYAASRAQNVEQVIRPALERGAIVLCDRFIDASIAYQGYGLQYDLDQIRSLNEWATNGLTPDLTFLFDLNPERASARMKDRGQLDRIESRDQAFHERVYAGFQTLLKQYPERIVRIDADQSIECIQDEVLDYTIERLQQGGVQK.

10 to 17 (GPDGSGKS) provides a ligand contact to ATP.

The protein belongs to the thymidylate kinase family.

The catalysed reaction is dTMP + ATP = dTDP + ADP. Functionally, phosphorylation of dTMP to form dTDP in both de novo and salvage pathways of dTTP synthesis. The polypeptide is Thymidylate kinase (Exiguobacterium sp. (strain ATCC BAA-1283 / AT1b)).